Reading from the N-terminus, the 570-residue chain is MTKKKNPNVFLDVSIGGDPVQRIVIELFADVVPKTAENFRALCTGEAGVGKSTGKPLHFKGSSFHRVIKGFMAQGGDFSNGNGTGGESIYGGKFSDENFRLDHDGAGVLSMANCGPNTNGSQFFILFKRQPHLDGKHVVFGKVVEGMAVIKKMELVGTSDGKPTSPVKIIDCGETSQIRAHDAAEREKGKSKKSNKNFSPGDVSDREAKETRKKESNEKRIKRKRRYSSSDSYSSSSDSDSDSESEAYSSSSYESSSSSDGKHRKRKSTTRHKGRRGERKSKGRSGKKKARPDRKPSTNSSSDTESSSSSDDEKVGHKAIKSVKVDNADQHANLDDSVKSRSRSPIRRRNQNSRSKSPSRSPVRVLGNGNRSPSRSPVRDLGNGSRSPREKPTEETVGKSFRSPSPSGVPKRIRKGRGFTERYSFARKYHTPSPERSPPRHWPDRRNFQDRNRDRYPSNRSYSERSPRGRFRSPPRRRSPPRYNRRRRSTSRSPDGYRRRLRDGSRSQSPRHRSRSQSPRKRQPISQDLKSRLGPQRSPIRGGRTSPAESLSPSHSPSPPGKRGLVSYAD.

A PPIase cyclophilin-type domain is found at 10-174 (FLDVSIGGDP…SPVKIIDCGE (165 aa)). Positions 180–570 (AHDAAEREKG…GKRGLVSYAD (391 aa)) are disordered. Over residues 203–219 (VSDREAKETRKKESNEK) the composition is skewed to basic and acidic residues. 2 stretches are compositionally biased toward low complexity: residues 229-238 (SSDSYSSSSD) and 246-259 (EAYSSSSYESSSSS). Over residues 262–292 (KHRKRKSTTRHKGRRGERKSKGRSGKKKARP) the composition is skewed to basic residues. Over residues 297 to 309 (STNSSSDTESSSS) the composition is skewed to low complexity. Over residues 323–339 (VKVDNADQHANLDDSVK) the composition is skewed to basic and acidic residues. Ser340 bears the Phosphoserine mark. Residues 340 to 351 (SRSRSPIRRRNQ) are compositionally biased toward basic residues. Low complexity predominate over residues 352 to 365 (NSRSKSPSRSPVRV). 2 stretches are compositionally biased toward basic and acidic residues: residues 387-397 (SPREKPTEETV) and 437-467 (SPPRHWPDRRNFQDRNRDRYPSNRSYSERSP). Basic residues predominate over residues 468 to 490 (RGRFRSPPRRRSPPRYNRRRRST). Over residues 495-505 (DGYRRRLRDGS) the composition is skewed to basic and acidic residues. Residues 509-523 (SPRHRSRSQSPRKRQ) are compositionally biased toward basic residues. Residues 546-555 (SPAESLSPSH) show a composition bias toward low complexity.

Belongs to the cyclophilin-type PPIase family. Interacts with SNRNP35, RNU1, SCL28, SCL30, SR30 and SR34. The binding to SR34 is phosphorylation-dependent. Ubiquitous.

The protein resides in the nucleus. It localises to the nucleoplasm. Its subcellular location is the nucleus speckle. The enzyme catalyses [protein]-peptidylproline (omega=180) = [protein]-peptidylproline (omega=0). Its function is as follows. PPIases accelerate the folding of proteins. It catalyzes the cis-trans isomerization of proline imidic peptide bonds in oligopeptides. May be implicated in the folding, transport, and assembly of proteins. Probably involved in early steps of spliceosomal assembly. The sequence is that of Peptidyl-prolyl cis-trans isomerase CYP63 (CYP63) from Arabidopsis thaliana (Mouse-ear cress).